A 324-amino-acid polypeptide reads, in one-letter code: Glyoxylate/hydroxypyruvate reductase B (324 aa).

Active-site residues include Arg237 and Glu266. Catalysis depends on His285, which acts as the Proton donor.

Belongs to the D-isomer specific 2-hydroxyacid dehydrogenase family. GhrB subfamily. In terms of assembly, homodimer.

The protein localises to the cytoplasm. It carries out the reaction glycolate + NADP(+) = glyoxylate + NADPH + H(+). It catalyses the reaction (R)-glycerate + NAD(+) = 3-hydroxypyruvate + NADH + H(+). The catalysed reaction is (R)-glycerate + NADP(+) = 3-hydroxypyruvate + NADPH + H(+). Catalyzes the NADPH-dependent reduction of glyoxylate and hydroxypyruvate into glycolate and glycerate, respectively. This is Glyoxylate/hydroxypyruvate reductase B from Escherichia coli O17:K52:H18 (strain UMN026 / ExPEC).